The sequence spans 192 residues: uncharacterized protein (192 aa).

The region spanning 29–160 (HRQAAVLIPI…PLDIYRRGDS (132 aa)) is the Nudix hydrolase domain. Positions 67–89 (GAVDDTDTSVIAAALREAEEEVA) match the Nudix box motif. Residues glutamate 83 and glutamate 87 each coordinate Mg(2+).

It belongs to the Nudix hydrolase family. PCD1 subfamily. Mn(2+) is required as a cofactor. Requires Mg(2+) as cofactor.

In terms of biological role, probably mediates the hydrolysis of some nucleoside diphosphate derivatives. This is an uncharacterized protein from Escherichia coli O7:K1 (strain IAI39 / ExPEC).